A 535-amino-acid chain; its full sequence is Mannan polymerase I complex VAN1 subunit (535 aa).

The Cytoplasmic segment spans residues 1–64 (MGMFFNLRSN…STPSKFQLTV (64 aa)). Residues 22–48 (LPISRNGSSNNIKDKRSEHNSNSLKGK) are disordered. Ser25 carries the post-translational modification Phosphoserine. Residues 65–81 (SITSLIIIAVLSLYLFI) form a helical; Signal-anchor for type II membrane protein membrane-spanning segment. The Lumenal segment spans residues 82–535 (SFLSGMGIGV…REREKRRQSE (454 aa)). N-linked (GlcNAc...) asparagine glycosylation is found at Asn215 and Asn251.

It belongs to the ANP1/MMN9/VAN1 family. As to quaternary structure, component of the M-Pol I complex which contains MNN9 and VAN1. In terms of processing, glycosylated.

The protein localises to the endoplasmic reticulum membrane. The protein resides in the golgi apparatus membrane. In terms of biological role, involved in regulation of the phosphorylation of a number of proteins, some of which appear to be important in cell growth control. Functionally, the M-Pol I complex possesses alpha-1,6-mannosyltransferase activity and is probably involved in the elongation of the mannan backbone of N-linked glycans on cell wall and periplasmic proteins. The polypeptide is Mannan polymerase I complex VAN1 subunit (VAN1) (Saccharomyces cerevisiae (strain ATCC 204508 / S288c) (Baker's yeast)).